The following is a 134-amino-acid chain: MAKGRTPRSFSQRYGKWNAKFTAFSNPTVASTILTNVAPIAQGNFQTNVPKFTSVNEQVSAVLTQYGVTGPSRAIYQGYGLKVARALNRIGAGPALTNMVAGLKAYYVSAYGANPEILDAVTNIILGSPTGYVS.

As to quaternary structure, homodimer.

The protein localises to the virion. In terms of biological role, self-assembles to form a helical, filamentous nucleocapsid. The capsid proteins wrap around the DNA and maintain it in an A-form by non-specific desolvation and specific coordination of the DNA phosphate groups by positively charged residues. This certainly protects the viral DNA under conditions such as the extreme desiccation of its host. The polypeptide is Major capsid protein (Saccharolobus solfataricus rod-shaped virus 1 (SSRV1)).